Reading from the N-terminus, the 396-residue chain is Elongation factor Tu (396 aa).

The tr-type G domain occupies lysine 10–threonine 206. Positions glycine 19–threonine 26 are G1. Glycine 19–threonine 26 lines the GTP pocket. Residue threonine 26 participates in Mg(2+) binding. The interval glycine 60–serine 64 is G2. The segment at aspartate 81 to glycine 84 is G3. Residues aspartate 81 to histidine 85 and asparagine 136 to aspartate 139 each bind GTP. The interval asparagine 136–aspartate 139 is G4. The interval serine 174 to arginine 176 is G5.

The protein belongs to the TRAFAC class translation factor GTPase superfamily. Classic translation factor GTPase family. EF-Tu/EF-1A subfamily. As to quaternary structure, monomer.

Its subcellular location is the cytoplasm. The enzyme catalyses GTP + H2O = GDP + phosphate + H(+). GTP hydrolase that promotes the GTP-dependent binding of aminoacyl-tRNA to the A-site of ribosomes during protein biosynthesis. This Xanthomonas oryzae pv. oryzae (strain MAFF 311018) protein is Elongation factor Tu.